The primary structure comprises 156 residues: Putative pre-16S rRNA nuclease (156 aa).

The protein belongs to the YqgF nuclease family.

It localises to the cytoplasm. Functionally, could be a nuclease involved in processing of the 5'-end of pre-16S rRNA. This chain is Putative pre-16S rRNA nuclease, found in Streptomyces avermitilis (strain ATCC 31267 / DSM 46492 / JCM 5070 / NBRC 14893 / NCIMB 12804 / NRRL 8165 / MA-4680).